The sequence spans 292 residues: NAD kinase (292 aa).

D72 serves as the catalytic Proton acceptor. NAD(+) is bound by residues 72-73 (DG), 146-147 (NE), H157, R174, D176, and 187-192 (TAYSLS).

The protein belongs to the NAD kinase family. It depends on a divalent metal cation as a cofactor.

It localises to the cytoplasm. The enzyme catalyses NAD(+) + ATP = ADP + NADP(+) + H(+). Functionally, involved in the regulation of the intracellular balance of NAD and NADP, and is a key enzyme in the biosynthesis of NADP. Catalyzes specifically the phosphorylation on 2'-hydroxyl of the adenosine moiety of NAD to yield NADP. The sequence is that of NAD kinase from Shewanella woodyi (strain ATCC 51908 / MS32).